The sequence spans 138 residues: Small ribosomal subunit protein uS11c (138 aa).

Belongs to the universal ribosomal protein uS11 family. Part of the 30S ribosomal subunit.

It localises to the plastid. This is Small ribosomal subunit protein uS11c from Cuscuta gronovii (Common dodder).